An 84-amino-acid polypeptide reads, in one-letter code: Large ribosomal subunit protein eL34 (84 aa).

Belongs to the eukaryotic ribosomal protein eL34 family.

The sequence is that of Large ribosomal subunit protein eL34 from Pyrobaculum islandicum (strain DSM 4184 / JCM 9189 / GEO3).